A 556-amino-acid chain; its full sequence is Glutamine--tRNA ligase (556 aa).

Residues 34–44 carry the 'HIGH' region motif; the sequence is PEPNGYLHIGH. ATP is bound by residues 35-37 and 41-47; these read EPN and HIGHAKS. L-glutamine contacts are provided by Asp67 and Tyr212. ATP-binding positions include Thr231, 261 to 262, and 269 to 271; these read RL and MSK. The short motif at 268-272 is the 'KMSKS' region element; it reads VMSKR.

The protein belongs to the class-I aminoacyl-tRNA synthetase family. In terms of assembly, monomer.

It is found in the cytoplasm. The enzyme catalyses tRNA(Gln) + L-glutamine + ATP = L-glutaminyl-tRNA(Gln) + AMP + diphosphate. In Vibrio parahaemolyticus serotype O3:K6 (strain RIMD 2210633), this protein is Glutamine--tRNA ligase.